Consider the following 185-residue polypeptide: Ribosome-recycling factor (185 aa).

It belongs to the RRF family.

It is found in the cytoplasm. Its function is as follows. Responsible for the release of ribosomes from messenger RNA at the termination of protein biosynthesis. May increase the efficiency of translation by recycling ribosomes from one round of translation to another. The chain is Ribosome-recycling factor from Geotalea daltonii (strain DSM 22248 / JCM 15807 / FRC-32) (Geobacter daltonii).